A 460-amino-acid chain; its full sequence is MLO-like protein 9 (460 aa).

Residues Met1–Thr21 lie on the Extracellular side of the membrane. The helical transmembrane segment at Trp22 to Ile42 threads the bilayer. The Cytoplasmic portion of the chain corresponds to His43 to Glu67. Residues Leu68–Ile88 traverse the membrane as a helical segment. Topologically, residues Cys89–His158 are extracellular. The chain crosses the membrane as a helical span at residues Ile159–Gly179. Topologically, residues Arg180–Leu289 are cytoplasmic. Residues Trp290 to Ile310 form a helical membrane-spanning segment. The Extracellular portion of the chain corresponds to Thr311–Pro315. The chain crosses the membrane as a helical span at residues Leu316–Ile336. At Gln337 to His366 the chain is on the cytoplasmic side. Residues Met367–Tyr387 form a helical membrane-spanning segment. Residues Glu388–His398 are Extracellular-facing. A helical transmembrane segment spans residues Phe399–Ile419. Residues Thr420–Lys460 lie on the Cytoplasmic side of the membrane. A calmodulin-binding region spans residues Glu441–Lys460.

The protein belongs to the MLO family.

It is found in the membrane. In terms of biological role, may be involved in modulation of pathogen defense and leaf cell death. Activity seems to be regulated by Ca(2+)-dependent calmodulin binding and seems not to require heterotrimeric G proteins. This chain is MLO-like protein 9 (MLO9), found in Arabidopsis thaliana (Mouse-ear cress).